The following is a 227-amino-acid chain: PKHD-type hydroxylase BamMC406_4714 (227 aa).

Residues 78–178 (KVFPPLFNRY…RVASFFWIQS (101 aa)) form the Fe2OG dioxygenase domain. Fe cation is bound by residues histidine 96, aspartate 98, and histidine 159. Residue arginine 169 coordinates 2-oxoglutarate.

The cofactor is Fe(2+). L-ascorbate serves as cofactor.

This is PKHD-type hydroxylase BamMC406_4714 from Burkholderia ambifaria (strain MC40-6).